Here is a 106-residue protein sequence, read N- to C-terminus: L-rhamnose mutarotase (106 aa).

Substrate is bound at residue Tyr-20. His-24 functions as the Proton donor in the catalytic mechanism. Residues Tyr-43 and 78–79 (WW) contribute to the substrate site.

This sequence belongs to the rhamnose mutarotase family. Homodimer.

Its subcellular location is the cytoplasm. The catalysed reaction is alpha-L-rhamnose = beta-L-rhamnose. It participates in carbohydrate metabolism; L-rhamnose metabolism. Involved in the anomeric conversion of L-rhamnose. The protein is L-rhamnose mutarotase of Brucella anthropi (strain ATCC 49188 / DSM 6882 / CCUG 24695 / JCM 21032 / LMG 3331 / NBRC 15819 / NCTC 12168 / Alc 37) (Ochrobactrum anthropi).